The following is a 193-amino-acid chain: Acyl carrier protein phosphodiesterase (193 aa).

Belongs to the AcpH family.

The enzyme catalyses holo-[ACP] + H2O = apo-[ACP] + (R)-4'-phosphopantetheine + H(+). Its function is as follows. Converts holo-ACP to apo-ACP by hydrolytic cleavage of the phosphopantetheine prosthetic group from ACP. The polypeptide is Acyl carrier protein phosphodiesterase (Escherichia coli O7:K1 (strain IAI39 / ExPEC)).